Here is a 226-residue protein sequence, read N- to C-terminus: Ribose-5-phosphate isomerase A (226 aa).

Substrate is bound by residues 26–29 (TGST), 82–85 (DGAD), and 95–98 (KGGG). Catalysis depends on glutamate 104, which acts as the Proton acceptor. Residue lysine 122 coordinates substrate.

It belongs to the ribose 5-phosphate isomerase family. Homodimer.

The enzyme catalyses aldehydo-D-ribose 5-phosphate = D-ribulose 5-phosphate. It functions in the pathway carbohydrate degradation; pentose phosphate pathway; D-ribose 5-phosphate from D-ribulose 5-phosphate (non-oxidative stage): step 1/1. Functionally, catalyzes the reversible conversion of ribose-5-phosphate to ribulose 5-phosphate. In Streptococcus uberis (strain ATCC BAA-854 / 0140J), this protein is Ribose-5-phosphate isomerase A.